A 388-amino-acid polypeptide reads, in one-letter code: WD repeat-containing protein 55 (388 aa).

Acidic residues predominate over residues 1 to 20 (MDPTCEESPAEDSNNEEEDL). The interval 1-33 (MDPTCEESPAEDSNNEEEDLDSTKAAPRIRDTP) is disordered. WD repeat units follow at residues 37–76 (VLEA…GETK), 83–122 (HHLK…LERR), 126–164 (AHSA…PLMD), 167–206 (QHEE…FELL), 209–248 (PQSG…ATSD), 251–290 (ALRA…VVGT), and 293–333 (QHAG…TVVV). S355 is subject to Phosphoserine. The disordered stretch occupies residues 364 to 388 (REDEEDAKAPEEVVRESDDDDDDSD). Positions 370–379 (AKAPEEVVRE) are enriched in basic and acidic residues.

It belongs to the WD repeat WDR55 family.

It is found in the nucleus. The protein localises to the nucleolus. The protein resides in the cytoplasm. Nucleolar protein that acts as a modulator of rRNA synthesis. Plays a central role during organogenesis. The protein is WD repeat-containing protein 55 (Wdr55) of Mus musculus (Mouse).